The primary structure comprises 241 residues: Lipopolysaccharide export system ATP-binding protein LptB (241 aa).

Positions 4–237 (LTAKNLAKAY…EHVKRVYLGE (234 aa)) constitute an ABC transporter domain. 36–43 (GPNGAGKT) is an ATP binding site.

The protein belongs to the ABC transporter superfamily. Outer membrane lipopolysaccharide export (TC 1.B.42) family. Component of the lipopolysaccharide transport and assembly complex. The LptBFG transporter is composed of two ATP-binding proteins (LptB) and two transmembrane proteins (LptF and LptG).

It localises to the cytoplasm. It is found in the cell inner membrane. Functionally, part of the ABC transporter complex LptBFG involved in the translocation of lipopolysaccharide (LPS) from the inner membrane to the outer membrane. Probably responsible for energy coupling to the transport system. The polypeptide is Lipopolysaccharide export system ATP-binding protein LptB (lptB) (Escherichia coli O157:H7).